A 105-amino-acid chain; its full sequence is Phosphoribosyl-ATP pyrophosphatase (105 aa).

Belongs to the PRA-PH family.

It is found in the cytoplasm. It carries out the reaction 1-(5-phospho-beta-D-ribosyl)-ATP + H2O = 1-(5-phospho-beta-D-ribosyl)-5'-AMP + diphosphate + H(+). It participates in amino-acid biosynthesis; L-histidine biosynthesis; L-histidine from 5-phospho-alpha-D-ribose 1-diphosphate: step 2/9. The chain is Phosphoribosyl-ATP pyrophosphatase from Ruegeria pomeroyi (strain ATCC 700808 / DSM 15171 / DSS-3) (Silicibacter pomeroyi).